The sequence spans 100 residues: NADH-quinone oxidoreductase subunit K 1 (100 aa).

3 consecutive transmembrane segments (helical) span residues L4–V24, I29–F49, and I60–M80.

Belongs to the complex I subunit 4L family. NDH-1 is composed of 14 different subunits. Subunits NuoA, H, J, K, L, M, N constitute the membrane sector of the complex.

The protein localises to the cell inner membrane. It catalyses the reaction a quinone + NADH + 5 H(+)(in) = a quinol + NAD(+) + 4 H(+)(out). In terms of biological role, NDH-1 shuttles electrons from NADH, via FMN and iron-sulfur (Fe-S) centers, to quinones in the respiratory chain. The immediate electron acceptor for the enzyme in this species is believed to be ubiquinone. Couples the redox reaction to proton translocation (for every two electrons transferred, four hydrogen ions are translocated across the cytoplasmic membrane), and thus conserves the redox energy in a proton gradient. In Geotalea daltonii (strain DSM 22248 / JCM 15807 / FRC-32) (Geobacter daltonii), this protein is NADH-quinone oxidoreductase subunit K 1.